The following is a 263-amino-acid chain: Phosphatidylglycerol--prolipoprotein diacylglyceryl transferase (263 aa).

A run of 4 helical transmembrane segments spans residues 6 to 26 (VIFSIGPVSIYWYSLAYVLGI), 50 to 70 (LLTATIVGIILGGRLGYVLIY), 85 to 105 (TWEGGMSFHGGAIGVLLAVII), and 112 to 132 (IPTFYALDLVSCGVPIGLFLG). Arg-133 is an a 1,2-diacyl-sn-glycero-3-phospho-(1'-sn-glycerol) binding site. A run of 3 helical transmembrane segments spans residues 169–189 (LYEALFEGLLLFAVANSLFFL), 197–217 (GALTGIAVMWYGIARFFVEFF), and 233–253 (MGQLLSIPMVLLGMLVYLGAL).

Belongs to the Lgt family.

It localises to the cell membrane. It carries out the reaction L-cysteinyl-[prolipoprotein] + a 1,2-diacyl-sn-glycero-3-phospho-(1'-sn-glycerol) = an S-1,2-diacyl-sn-glyceryl-L-cysteinyl-[prolipoprotein] + sn-glycerol 1-phosphate + H(+). It participates in protein modification; lipoprotein biosynthesis (diacylglyceryl transfer). In terms of biological role, catalyzes the transfer of the diacylglyceryl group from phosphatidylglycerol to the sulfhydryl group of the N-terminal cysteine of a prolipoprotein, the first step in the formation of mature lipoproteins. This chain is Phosphatidylglycerol--prolipoprotein diacylglyceryl transferase, found in Wolbachia pipientis wMel.